The chain runs to 128 residues: Putative transmembrane protein 244 (128 aa).

Helical transmembrane passes span 17–37 (FLLC…MGCV), 65–85 (VLLV…VPVV), and 93–113 (AISV…EFPL).

It localises to the membrane. This Homo sapiens (Human) protein is Putative transmembrane protein 244 (TMEM244).